Consider the following 170-residue polypeptide: Acetyl-CoA decarbonylase/synthase complex subunit epsilon 2 (170 aa).

It belongs to the CdhB family. As to quaternary structure, heterotetramer of two alpha and two epsilon subunits. The ACDS complex is made up of alpha, epsilon, beta, gamma and delta subunits with a probable stoichiometry of (alpha(2)epsilon(2))(4)-beta(8)-(gamma(1)delta(1))(8).

It participates in one-carbon metabolism; methanogenesis from acetate. In terms of biological role, part of a complex that catalyzes the reversible cleavage of acetyl-CoA, allowing growth on acetate as sole source of carbon and energy. The alpha-epsilon subcomponent functions as a carbon monoxide dehydrogenase. The precise role of the epsilon subunit is unclear; it may have a stabilizing role within the alpha(2)epsilon(2) component and/or be involved in electron transfer to FAD during a potential FAD-mediated CO oxidation. This chain is Acetyl-CoA decarbonylase/synthase complex subunit epsilon 2 (cdhB2), found in Methanosarcina mazei (strain ATCC BAA-159 / DSM 3647 / Goe1 / Go1 / JCM 11833 / OCM 88) (Methanosarcina frisia).